Here is a 505-residue protein sequence, read N- to C-terminus: Keratin, type II cuticular Hb1 (505 aa).

Residues 1 to 106 (MTCGSGFGGR…PNAQCVKQEE (106 aa)) form a head region. The IF rod domain maps to 106-417 (EKEQIKSLNS…RLLEGEEQRL (312 aa)). The interval 107-141 (KEQIKSLNSRFAAFIDKVRFLEQQNKLLETKLQFY) is coil 1A. Positions 142–151 (QNRECCQSNL) are linker 1. Residues 152-252 (EPLFEGYIET…YEEEILILQS (101 aa)) are coil 1B. Lys212 is covalently cross-linked (Glycyl lysine isopeptide (Lys-Gly) (interchain with G-Cter in SUMO1)). Residues 253–269 (HISDTSVVVKLDNSRDL) form a linker 12 region. Positions 270-413 (NMDCIIAEIK…ATYRRLLEGE (144 aa)) are coil 2. The tail stretch occupies residues 414 to 505 (EQRLCEGIGA…GSCGSSCRKC (92 aa)).

It belongs to the intermediate filament family. Heterotetramer of two type I and two type II keratins. In terms of tissue distribution, abundantly expressed in the differentiating cortex of growing (anagen) hair. Expression is restricted to the keratinocytes of the hair cortex and is absent from inner root sheath and medulla. Expressed in malignant lymph node tissue in breast carcinoma tissue.

The protein is Keratin, type II cuticular Hb1 (KRT81) of Homo sapiens (Human).